The primary structure comprises 323 residues: Glyoxylate/hydroxypyruvate reductase B (323 aa).

The tract at residues 37–62 (AEHGGAGARRRHDRLQQHGGSSAAGE) is disordered. Residues Arg-236 and Glu-265 contribute to the active site. The active-site Proton donor is His-284.

It belongs to the D-isomer specific 2-hydroxyacid dehydrogenase family. GhrB subfamily. In terms of assembly, homodimer.

It localises to the cytoplasm. It carries out the reaction glycolate + NADP(+) = glyoxylate + NADPH + H(+). The catalysed reaction is (R)-glycerate + NAD(+) = 3-hydroxypyruvate + NADH + H(+). The enzyme catalyses (R)-glycerate + NADP(+) = 3-hydroxypyruvate + NADPH + H(+). In terms of biological role, catalyzes the NADPH-dependent reduction of glyoxylate and hydroxypyruvate into glycolate and glycerate, respectively. The polypeptide is Glyoxylate/hydroxypyruvate reductase B (tkrA) (Enterobacter agglomerans (Erwinia herbicola)).